A 183-amino-acid polypeptide reads, in one-letter code: ATP synthase subunit delta (183 aa).

It belongs to the ATPase delta chain family. As to quaternary structure, F-type ATPases have 2 components, F(1) - the catalytic core - and F(0) - the membrane proton channel. F(1) has five subunits: alpha(3), beta(3), gamma(1), delta(1), epsilon(1). F(0) has three main subunits: a(1), b(2) and c(10-14). The alpha and beta chains form an alternating ring which encloses part of the gamma chain. F(1) is attached to F(0) by a central stalk formed by the gamma and epsilon chains, while a peripheral stalk is formed by the delta and b chains.

The protein resides in the cell inner membrane. In terms of biological role, f(1)F(0) ATP synthase produces ATP from ADP in the presence of a proton or sodium gradient. F-type ATPases consist of two structural domains, F(1) containing the extramembraneous catalytic core and F(0) containing the membrane proton channel, linked together by a central stalk and a peripheral stalk. During catalysis, ATP synthesis in the catalytic domain of F(1) is coupled via a rotary mechanism of the central stalk subunits to proton translocation. Functionally, this protein is part of the stalk that links CF(0) to CF(1). It either transmits conformational changes from CF(0) to CF(1) or is implicated in proton conduction. This chain is ATP synthase subunit delta, found in Ruthia magnifica subsp. Calyptogena magnifica.